The primary structure comprises 334 residues: Fructose-1,6-bisphosphatase class 1 (334 aa).

Positions 91, 113, 115, and 116 each coordinate Mg(2+). Substrate contacts are provided by residues 116-119 (DGSS), Asn-208, and Lys-274. Glu-280 is a binding site for Mg(2+).

Belongs to the FBPase class 1 family. Homotetramer. Mg(2+) serves as cofactor.

The protein resides in the cytoplasm. The enzyme catalyses beta-D-fructose 1,6-bisphosphate + H2O = beta-D-fructose 6-phosphate + phosphate. Its pathway is carbohydrate biosynthesis; gluconeogenesis. This is Fructose-1,6-bisphosphatase class 1 from Herminiimonas arsenicoxydans.